Consider the following 1078-residue polypeptide: Disheveled-associated activator of morphogenesis 1 (1078 aa).

Phosphoserine is present on Ser34. The GBD/FH3 domain occupies 45–420 (LPMPPVEELD…QIVIQNDKGQ (376 aa)). Residues 437–526 (RMLVNENEVK…ELSRRAVCAS (90 aa)) are a coiled coil. Disordered regions lie at residues 456–480 (RKEH…TQEK) and 524–585 (CASI…PLGA). The FH1 domain maps to 528 to 599 (PGGPSPGAPG…PGAPMGLALK (72 aa)). Composition is skewed to pro residues over residues 530–539 (GPSPGAPGGP) and 548–585 (LLPP…PLGA). Residues 600–1009 (KKSIPQPTNA…EERRARMEAQ (410 aa)) form the FH2 domain. The tract at residues 693–702 (AQNCNILLSR) is actin-binding. Residues 987–1027 (KQENENMRKKKEEEERRARMEAQLKEQRERERKMRKAKENS) are compositionally biased toward basic and acidic residues. Disordered regions lie at residues 987 to 1034 (KQEN…GEFD) and 1055 to 1078 (RNRK…KLNF). Phosphoserine is present on residues Ser1027 and Ser1030. Residues 1027 to 1058 (SEESGEFDDLVSALRSGEVFDKDLSKLKRNRK) enclose the DAD domain. Positions 1067–1078 (SSRERPITKLNF) are enriched in basic and acidic residues.

Belongs to the formin homology family. In terms of assembly, homodimer. Interacts with CIP4, FNBP1 and FNBP1L. Interacts with the SH3 domains of Abl, BTK, endophilin, spectrin and SRC. Binds specifically to GTP-bound CDC42 and RHOA. Interacts with INTU; INTU mediates the indirect interaction between DAAM1 and NPHP4. Interacts (via coiled coil domain) with KANK1 (via coiled coil domain). As to expression, expressed in all tissues examined.

Its subcellular location is the cytoplasm. It is found in the cytoskeleton. The protein resides in the cilium basal body. Its function is as follows. Binds to disheveled (Dvl) and Rho, and mediates Wnt-induced Dvl-Rho complex formation. May play a role as a scaffolding protein to recruit Rho-GDP and Rho-GEF, thereby enhancing Rho-GTP formation. Can direct nucleation and elongation of new actin filaments. Involved in building functional cilia. Involved in the organization of the subapical actin network in multiciliated epithelial cells. Together with DAAM2, required for myocardial maturation and sarcomere assembly. During cell division, may regulate RHOA activation that signals spindle orientation and chromosomal segregation. In Homo sapiens (Human), this protein is Disheveled-associated activator of morphogenesis 1 (DAAM1).